The following is a 320-amino-acid chain: Phosphate acetyltransferase (320 aa).

The protein belongs to the phosphate acetyltransferase and butyryltransferase family.

The protein resides in the cytoplasm. The catalysed reaction is acetyl-CoA + phosphate = acetyl phosphate + CoA. It functions in the pathway metabolic intermediate biosynthesis; acetyl-CoA biosynthesis; acetyl-CoA from acetate: step 2/2. This Mycoplasma pneumoniae (strain ATCC 29342 / M129 / Subtype 1) (Mycoplasmoides pneumoniae) protein is Phosphate acetyltransferase (pta).